A 60-amino-acid polypeptide reads, in one-letter code: UPF0509 protein Ent638_2183 (60 aa).

Belongs to the UPF0509 family.

This chain is UPF0509 protein Ent638_2183, found in Enterobacter sp. (strain 638).